A 228-amino-acid chain; its full sequence is Fibrillarin-like rRNA/tRNA 2'-O-methyltransferase (228 aa).

Residues 85-86 (TT), 103-104 (EF), 128-129 (DA), and 148-151 (DVAQ) contribute to the S-adenosyl-L-methionine site.

The protein belongs to the methyltransferase superfamily. Fibrillarin family. As to quaternary structure, interacts with nop5. Component of box C/D small ribonucleoprotein (sRNP) particles that contain rpl7ae, FlpA and nop5, plus a guide RNA.

Its function is as follows. Involved in pre-rRNA and tRNA processing. Utilizes the methyl donor S-adenosyl-L-methionine to catalyze the site-specific 2'-hydroxyl methylation of ribose moieties in rRNA and tRNA. Site specificity is provided by a guide RNA that base pairs with the substrate. Methylation occurs at a characteristic distance from the sequence involved in base pairing with the guide RNA. This chain is Fibrillarin-like rRNA/tRNA 2'-O-methyltransferase, found in Methanococcus voltae.